The following is a 154-amino-acid chain: 3-hydroxyacyl-[acyl-carrier-protein] dehydratase FabZ (154 aa).

His54 is an active-site residue.

Belongs to the thioester dehydratase family. FabZ subfamily.

Its subcellular location is the cytoplasm. It catalyses the reaction a (3R)-hydroxyacyl-[ACP] = a (2E)-enoyl-[ACP] + H2O. In terms of biological role, involved in unsaturated fatty acids biosynthesis. Catalyzes the dehydration of short chain beta-hydroxyacyl-ACPs and long chain saturated and unsaturated beta-hydroxyacyl-ACPs. The sequence is that of 3-hydroxyacyl-[acyl-carrier-protein] dehydratase FabZ from Shewanella putrefaciens (strain CN-32 / ATCC BAA-453).